The chain runs to 457 residues: Siroheme synthase (457 aa).

The precorrin-2 dehydrogenase /sirohydrochlorin ferrochelatase stretch occupies residues 1 to 204 (MDHLPIFCQL…ADEKAVNATT (204 aa)). NAD(+) contacts are provided by residues 22-23 (DV) and 43-44 (LT). Serine 128 carries the phosphoserine modification. The segment at 216-457 (GEVVLVGAGP…RDKLNWFSNY (242 aa)) is uroporphyrinogen-III C-methyltransferase. Proline 225 contributes to the S-adenosyl-L-methionine binding site. Aspartate 248 acts as the Proton acceptor in catalysis. Lysine 270 acts as the Proton donor in catalysis. S-adenosyl-L-methionine contacts are provided by residues 301–303 (GGD), isoleucine 306, 331–332 (TA), methionine 382, and glycine 411.

In the N-terminal section; belongs to the precorrin-2 dehydrogenase / sirohydrochlorin ferrochelatase family. This sequence in the C-terminal section; belongs to the precorrin methyltransferase family.

The catalysed reaction is uroporphyrinogen III + 2 S-adenosyl-L-methionine = precorrin-2 + 2 S-adenosyl-L-homocysteine + H(+). It catalyses the reaction precorrin-2 + NAD(+) = sirohydrochlorin + NADH + 2 H(+). It carries out the reaction siroheme + 2 H(+) = sirohydrochlorin + Fe(2+). It functions in the pathway cofactor biosynthesis; adenosylcobalamin biosynthesis; precorrin-2 from uroporphyrinogen III: step 1/1. It participates in cofactor biosynthesis; adenosylcobalamin biosynthesis; sirohydrochlorin from precorrin-2: step 1/1. Its pathway is porphyrin-containing compound metabolism; siroheme biosynthesis; precorrin-2 from uroporphyrinogen III: step 1/1. The protein operates within porphyrin-containing compound metabolism; siroheme biosynthesis; siroheme from sirohydrochlorin: step 1/1. It functions in the pathway porphyrin-containing compound metabolism; siroheme biosynthesis; sirohydrochlorin from precorrin-2: step 1/1. In terms of biological role, multifunctional enzyme that catalyzes the SAM-dependent methylations of uroporphyrinogen III at position C-2 and C-7 to form precorrin-2 via precorrin-1. Then it catalyzes the NAD-dependent ring dehydrogenation of precorrin-2 to yield sirohydrochlorin. Finally, it catalyzes the ferrochelation of sirohydrochlorin to yield siroheme. This is Siroheme synthase from Salmonella gallinarum (strain 287/91 / NCTC 13346).